Consider the following 250-residue polypeptide: Leucyl/phenylalanyl-tRNA--protein transferase (250 aa).

Belongs to the L/F-transferase family.

Its subcellular location is the cytoplasm. It catalyses the reaction N-terminal L-lysyl-[protein] + L-leucyl-tRNA(Leu) = N-terminal L-leucyl-L-lysyl-[protein] + tRNA(Leu) + H(+). It carries out the reaction N-terminal L-arginyl-[protein] + L-leucyl-tRNA(Leu) = N-terminal L-leucyl-L-arginyl-[protein] + tRNA(Leu) + H(+). The catalysed reaction is L-phenylalanyl-tRNA(Phe) + an N-terminal L-alpha-aminoacyl-[protein] = an N-terminal L-phenylalanyl-L-alpha-aminoacyl-[protein] + tRNA(Phe). In terms of biological role, functions in the N-end rule pathway of protein degradation where it conjugates Leu, Phe and, less efficiently, Met from aminoacyl-tRNAs to the N-termini of proteins containing an N-terminal arginine or lysine. The protein is Leucyl/phenylalanyl-tRNA--protein transferase of Bordetella avium (strain 197N).